The primary structure comprises 429 residues: ATP-dependent RNA helicase RhlB (429 aa).

The short motif at 9-37 is the Q motif element; that stretch reads DKFAQMGLEPEVLAGLESKGFHYCTPIQA. The region spanning 40–219 is the Helicase ATP-binding domain; that stretch reads LPLLVEGHDL…YEHMNHPEHV (180 aa). Position 53–60 (53–60) interacts with ATP; it reads AQTGTGKT. The short motif at 165-168 is the DEAD box element; the sequence is DEAD. The Helicase C-terminal domain maps to 243–390; the sequence is KMLLLLSLME…VSKYDREALL (148 aa). The interval 399–429 is disordered; that stretch reads VFRNRQPVNRNMRDRQGGGNSNNRRRPPRKS.

This sequence belongs to the DEAD box helicase family. RhlB subfamily. Component of the RNA degradosome, which is a multiprotein complex involved in RNA processing and mRNA degradation.

It is found in the cytoplasm. The catalysed reaction is ATP + H2O = ADP + phosphate + H(+). Functionally, DEAD-box RNA helicase involved in RNA degradation. Has RNA-dependent ATPase activity and unwinds double-stranded RNA. This chain is ATP-dependent RNA helicase RhlB, found in Aeromonas hydrophila subsp. hydrophila (strain ATCC 7966 / DSM 30187 / BCRC 13018 / CCUG 14551 / JCM 1027 / KCTC 2358 / NCIMB 9240 / NCTC 8049).